The sequence spans 263 residues: Glutamate racemase (263 aa).

Substrate contacts are provided by residues 12 to 13 (DS) and 44 to 45 (YG). Residue Cys75 is the Proton donor/acceptor of the active site. 76-77 (NT) provides a ligand contact to substrate. The active-site Proton donor/acceptor is Cys186. 187 to 188 (TH) serves as a coordination point for substrate.

This sequence belongs to the aspartate/glutamate racemases family.

It catalyses the reaction L-glutamate = D-glutamate. It functions in the pathway cell wall biogenesis; peptidoglycan biosynthesis. Its function is as follows. Provides the (R)-glutamate required for cell wall biosynthesis. The sequence is that of Glutamate racemase from Ectopseudomonas mendocina (strain ymp) (Pseudomonas mendocina).